Consider the following 600-residue polypeptide: Alpha pinene synthase, chloroplastic (600 aa).

The tract at residues 1–26 (MSSISMHARPLNISAANNHHPSWDRR) is disordered. A chloroplast-targeting transit peptide spans 1–31 (MSSISMHARPLNISAANNHHPSWDRRVSKPR). Mg(2+)-binding residues include Asp354, Asp358, Asp498, and Glu506. The short motif at 354-358 (DDVYD) is the DDXXD motif element.

This sequence belongs to the terpene synthase family. Tpsa subfamily. It depends on Mg(2+) as a cofactor. Mn(2+) is required as a cofactor. In terms of tissue distribution, barely detectable in leaves.

It is found in the plastid. The protein resides in the chloroplast. The enzyme catalyses (2E)-geranyl diphosphate = alpha-pinene + diphosphate. Its pathway is secondary metabolite biosynthesis; terpenoid biosynthesis. Monoterpene synthase involved in the biosynthesis of volatile compounds widely used in aromatherapy and folk medicine, and present in culinary herbs. Mediates the conversion of (2E)-geranyl diphosphate (GPP) into alpha-pinene and, as minor compounds, into alpha-phellandrene, limonene and alpha-terpinolene. The sequence is that of Alpha pinene synthase, chloroplastic from Lavandula stoechas (Butterfly lavender).